The chain runs to 143 residues: Pre-mRNA-splicing factor U5-Cwc21 (143 aa).

A CWF21 domain is found at 27 to 70 (EHHRSLRAIKLKVLLYREEREAAGVPPDVISRECATLHGSLLRN).

Belongs to the CWC21 family. Associates with the NTC complex (or PRP19-associated complex). The NTC complex associates with the spliceosome after the release of the U1 and U4 snRNAs and forms the CWC spliceosome subcomplex reminiscent of a late-stage spliceosome. Associates specifically with U5-containing snRNPs.

The protein localises to the cytoplasm. It is found in the nucleus. Essential protein involved in pre-mRNA cis- and trans-splicing. May function at or prior to the first catalytic step of splicing at the catalytic center of the spliceosome. May do so by stabilizing the catalytic center or the position of the RNA substrate. The sequence is that of Pre-mRNA-splicing factor U5-Cwc21 from Trypanosoma brucei brucei (strain 927/4 GUTat10.1).